The sequence spans 355 residues: Protein RecA (355 aa).

Residue 67 to 74 (GPESSGKT) coordinates ATP.

This sequence belongs to the RecA family.

The protein localises to the cytoplasm. In terms of biological role, can catalyze the hydrolysis of ATP in the presence of single-stranded DNA, the ATP-dependent uptake of single-stranded DNA by duplex DNA, and the ATP-dependent hybridization of homologous single-stranded DNAs. It interacts with LexA causing its activation and leading to its autocatalytic cleavage. In Shewanella piezotolerans (strain WP3 / JCM 13877), this protein is Protein RecA.